Here is a 169-residue protein sequence, read N- to C-terminus: Crossover junction endodeoxyribonuclease RuvC (169 aa).

Catalysis depends on residues Asp-11, Glu-71, and Asp-143. Residues Asp-11, Glu-71, and Asp-143 each contribute to the Mg(2+) site.

The protein belongs to the RuvC family. Homodimer which binds Holliday junction (HJ) DNA. The HJ becomes 2-fold symmetrical on binding to RuvC with unstacked arms; it has a different conformation from HJ DNA in complex with RuvA. In the full resolvosome a probable DNA-RuvA(4)-RuvB(12)-RuvC(2) complex forms which resolves the HJ. The cofactor is Mg(2+).

It is found in the cytoplasm. It catalyses the reaction Endonucleolytic cleavage at a junction such as a reciprocal single-stranded crossover between two homologous DNA duplexes (Holliday junction).. In terms of biological role, the RuvA-RuvB-RuvC complex processes Holliday junction (HJ) DNA during genetic recombination and DNA repair. Endonuclease that resolves HJ intermediates. Cleaves cruciform DNA by making single-stranded nicks across the HJ at symmetrical positions within the homologous arms, yielding a 5'-phosphate and a 3'-hydroxyl group; requires a central core of homology in the junction. The consensus cleavage sequence is 5'-(A/T)TT(C/G)-3'. Cleavage occurs on the 3'-side of the TT dinucleotide at the point of strand exchange. HJ branch migration catalyzed by RuvA-RuvB allows RuvC to scan DNA until it finds its consensus sequence, where it cleaves and resolves the cruciform DNA. The polypeptide is Crossover junction endodeoxyribonuclease RuvC (Rhizobium johnstonii (strain DSM 114642 / LMG 32736 / 3841) (Rhizobium leguminosarum bv. viciae)).